A 280-amino-acid polypeptide reads, in one-letter code: F420-dependent methylenetetrahydromethanopterin dehydrogenase (280 aa).

Belongs to the MTD family.

It carries out the reaction 5,10-methylenetetrahydromethanopterin + oxidized coenzyme F420-(gamma-L-Glu)(n) + 2 H(+) = 5,10-methenyl-5,6,7,8-tetrahydromethanopterin + reduced coenzyme F420-(gamma-L-Glu)(n). The protein operates within one-carbon metabolism; methanogenesis from CO(2); 5,10-methylene-5,6,7,8-tetrahydromethanopterin from 5,10-methenyl-5,6,7,8-tetrahydromethanopterin (coenzyme F420 route): step 1/1. Catalyzes the reversible reduction of methenyl-H(4)MPT(+) to methylene-H(4)MPT. This chain is F420-dependent methylenetetrahydromethanopterin dehydrogenase, found in Methanosphaerula palustris (strain ATCC BAA-1556 / DSM 19958 / E1-9c).